The sequence spans 310 residues: Porphobilinogen deaminase (310 aa).

An S-(dipyrrolylmethanemethyl)cysteine modification is found at Cys242.

The protein belongs to the HMBS family. As to quaternary structure, monomer. It depends on dipyrromethane as a cofactor.

The enzyme catalyses 4 porphobilinogen + H2O = hydroxymethylbilane + 4 NH4(+). It functions in the pathway porphyrin-containing compound metabolism; protoporphyrin-IX biosynthesis; coproporphyrinogen-III from 5-aminolevulinate: step 2/4. Tetrapolymerization of the monopyrrole PBG into the hydroxymethylbilane pre-uroporphyrinogen in several discrete steps. The sequence is that of Porphobilinogen deaminase from Halorhodospira halophila (strain DSM 244 / SL1) (Ectothiorhodospira halophila (strain DSM 244 / SL1)).